A 598-amino-acid chain; its full sequence is Elongation factor 4 (598 aa).

The tr-type G domain occupies 2 to 184 (KNIRNFSIIA…EIVAKIPAPE (183 aa)). GTP-binding positions include 14–19 (DHGKST) and 131–134 (NKID).

Belongs to the TRAFAC class translation factor GTPase superfamily. Classic translation factor GTPase family. LepA subfamily.

The protein resides in the cell inner membrane. It carries out the reaction GTP + H2O = GDP + phosphate + H(+). In terms of biological role, required for accurate and efficient protein synthesis under certain stress conditions. May act as a fidelity factor of the translation reaction, by catalyzing a one-codon backward translocation of tRNAs on improperly translocated ribosomes. Back-translocation proceeds from a post-translocation (POST) complex to a pre-translocation (PRE) complex, thus giving elongation factor G a second chance to translocate the tRNAs correctly. Binds to ribosomes in a GTP-dependent manner. In Haemophilus influenzae (strain 86-028NP), this protein is Elongation factor 4.